A 151-amino-acid polypeptide reads, in one-letter code: Apolipoprotein A-I (151 aa).

Residues 1 to 18 form the signal peptide; sequence MKAVVLTLAVLFLTGSQA. Positions 19–24 are excised as a propeptide; it reads RHFWQQ. Tandem repeats lie at residues 67 to 88 and 89 to 110. The interval 67–143 is 4 X approximate tandem repeats; it reads LKLLDNWDTL…EVELYRQKVA (77 aa). A Methionine sulfoxide modification is found at Met109. Residues 111–121 form a 3; half-length repeat; it reads KDLEEVKQKVQ. Residues 122–143 form repeat 4; that stretch reads PYLDDFQKKWQEEVELYRQKVA.

It belongs to the apolipoprotein A1/A4/E family. Homodimer. Interacts with APOA1BP and CLU. Component of a sperm activating protein complex (SPAP), consisting of APOA1, an immunoglobulin heavy chain, an immunoglobulin light chain and albumin. Interacts with NDRG1. Interacts with SCGB3A2. Interacts with NAXE and YJEFN3. Glycosylated. In terms of processing, palmitoylated. Post-translationally, phosphorylation sites are present in the extracellular medium. In terms of tissue distribution, major protein of plasma HDL, also found in chylomicrons.

Its subcellular location is the secreted. Its function is as follows. Participates in the reverse transport of cholesterol from tissues to the liver for excretion by promoting cholesterol efflux from tissues and by acting as a cofactor for the lecithin cholesterol acyltransferase (LCAT). As part of the SPAP complex, activates spermatozoa motility. The protein is Apolipoprotein A-I (APOA1) of Panthera tigris altaica (Siberian tiger).